The following is a 131-amino-acid chain: NADPH-dependent 7-cyano-7-deazaguanine reductase (131 aa).

Cys48 serves as the catalytic Thioimide intermediate. The Proton donor role is filled by Asp55. Substrate is bound by residues 70–72 and 89–90; these read VEL and QE.

The protein belongs to the GTP cyclohydrolase I family. QueF type 1 subfamily.

Its subcellular location is the cytoplasm. It carries out the reaction 7-aminomethyl-7-carbaguanine + 2 NADP(+) = 7-cyano-7-deazaguanine + 2 NADPH + 3 H(+). It functions in the pathway tRNA modification; tRNA-queuosine biosynthesis. Catalyzes the NADPH-dependent reduction of 7-cyano-7-deazaguanine (preQ0) to 7-aminomethyl-7-deazaguanine (preQ1). The polypeptide is NADPH-dependent 7-cyano-7-deazaguanine reductase (Caldicellulosiruptor bescii (strain ATCC BAA-1888 / DSM 6725 / KCTC 15123 / Z-1320) (Anaerocellum thermophilum)).